Reading from the N-terminus, the 108-residue chain is Translation initiation factor 1A (108 aa).

Residues 11-85 (SVKEVPKPAE…NKCDIIYKYS (75 aa)) enclose the S1-like domain.

This sequence belongs to the eIF-1A family.

Seems to be required for maximal rate of protein biosynthesis. Enhances ribosome dissociation into subunits and stabilizes the binding of the initiator Met-tRNA(I) to 40 S ribosomal subunits. The chain is Translation initiation factor 1A (eIF1A) from Sulfurisphaera tokodaii (strain DSM 16993 / JCM 10545 / NBRC 100140 / 7) (Sulfolobus tokodaii).